We begin with the raw amino-acid sequence, 284 residues long: Nucleotide-binding protein VF_0384 (284 aa).

8-15 provides a ligand contact to ATP; the sequence is GSSGAGKS. Position 56 to 59 (56 to 59) interacts with GTP; it reads DIRN.

Belongs to the RapZ-like family.

Functionally, displays ATPase and GTPase activities. The chain is Nucleotide-binding protein VF_0384 from Aliivibrio fischeri (strain ATCC 700601 / ES114) (Vibrio fischeri).